Here is a 303-residue protein sequence, read N- to C-terminus: Biphenyl-2,3-diol 1,2-dioxygenase (303 aa).

VOC domains are found at residues 5 to 119 (SLGY…IYYG) and 143 to 264 (GLGH…YGWS). The Fe cation site is built by H146, H210, and E260. The disordered stretch occupies residues 283–303 (WGHKSVRDKALRATKHEQQPE). Positions 287 to 303 (SVRDKALRATKHEQQPE) are enriched in basic and acidic residues.

This sequence belongs to the extradiol ring-cleavage dioxygenase family. In terms of assembly, homooctamer. It depends on Fe(2+) as a cofactor.

It catalyses the reaction biphenyl-2,3-diol + O2 = 2-hydroxy-6-oxo-6-phenylhexa-2,4-dienoate + H(+). The protein operates within xenobiotic degradation; biphenyl degradation; 2-hydroxy-2,4-pentadienoate and benzoate from biphenyl: step 3/4. The sequence is that of Biphenyl-2,3-diol 1,2-dioxygenase (bphC) from Metapseudomonas furukawaii (Pseudomonas furukawaii).